The primary structure comprises 705 residues: Gamma-adducin (705 aa).

Polar residues predominate over residues 1–10 (MSSDTSQAVI). Positions 1-22 (MSSDTSQAVITTPPPPSMPHKE) are disordered. An N-acetylserine modification is found at serine 2. Serine 31, serine 42, serine 64, serine 402, serine 414, serine 423, serine 442, and serine 461 each carry phosphoserine. Disordered stretches follow at residues 472 to 495 (EDPSKVSSGTPIKIEDPNQFVPLN), 535 to 556 (PSTMRFEDDDQGPPAPPNPFSH), 572 to 612 (KQQG…EENH), and 658 to 705 (EITI…KVEA). Lysine 484 participates in a covalent cross-link: Glycyl lysine isopeptide (Lys-Gly) (interchain with G-Cter in SUMO2). Phosphoserine is present on residues serine 583, serine 585, serine 590, serine 672, serine 676, serine 678, and serine 680. Over residues 590 to 605 (SVSQIQSQTQSPQSVP) the composition is skewed to low complexity. Over residues 681 to 705 (PSKKKKKFRTPSFLKKNKKKEKVEA) the composition is skewed to basic residues. Residue serine 682 is modified to Phosphoserine; by PKC. The tract at residues 683-700 (KKKKKFRTPSFLKKNKKK) is interaction with calmodulin.

The protein belongs to the aldolase class II family. Adducin subfamily. As to quaternary structure, heterodimer of an alpha and a gamma subunit. Sumoylated. In terms of processing, proteolytically cleaved by asparagine endopeptidase (AEP) into 2 fragments. Overexpression of the 1-357 fragment induces neuronal apoptosis, and overexpression of either 1-357 or 358-706 fragment increases the degeneration of dendritic spines. Overexpression of the 1-357 fragment impairs neurite outgrowth by downregulating the expression of Rac2, and induces synaptic dysfunction and cognitive impairments in tau P301S transgenic mice, a mouse model for Alzheimer disease (AD). In terms of tissue distribution, expressed in kidney, brain, spleen, liver and heart. As to expression, expressed in renal interlobular arteries, afferent/efferent arterioles, parietal glomerular epithelial cells and microvilli of the luminal surface of the proximal tubule (at protein level). Expressed in podocytes (at protein level) Expressed in renal cortex (at protein level). Expressed in primary vascular smooth muscle cells (VSMCs) of the kidney (at protein level). Expressed in tubular cells and glomeruli (at protein level).

The protein localises to the cytoplasm. It is found in the cytoskeleton. Its subcellular location is the cell membrane. Membrane-cytoskeleton-associated protein that promotes the assembly of the spectrin-actin network. Plays a role in actin filament capping. Binds to calmodulin. Involved in myogenic reactivity of the renal afferent arteriole (Af-art), renal interlobular arteries and middle cerebral artery (MCA) to increased perfusion pressure. Involved in regulation of potassium channels in the vascular smooth muscle cells (VSMCs) of the Af-art and MCA ex vivo. Involved in regulation of glomerular capillary pressure, glomerular filtration rate (GFR) and glomerular nephrin expression in response to hypertension. Involved in renal blood flow (RBF) autoregulation. Plays a role in podocyte structure and function. Regulates globular monomer actin (G-actin) and filamentous polymer actin (F-actin) ratios in the primary podocytes affecting actin cytoskeleton organization. Regulates expression of synaptopodin, RhoA, Rac1 and CDC42 in the renal cortex and the primary podocytes. Regulates expression of nephrin in the glomeruli and in the primary podocytes, expression of nephrin and podocinin in the renal cortex, and expression of focal adhesion proteins integrin alpha-3 and integrin beta-1 in the glomeruli. Involved in cell migration and cell adhesion of podocytes, and in podocyte foot process effacement. Regulates expression of profibrotics markers MMP2, MMP9, TGF beta-1, tubular tight junction protein E-cadherin, and mesenchymal markers vimentin and alpha-SMA. Promotes the growth of neurites. The protein is Gamma-adducin (Add3) of Rattus norvegicus (Rat).